We begin with the raw amino-acid sequence, 418 residues long: Putative ion-transport protein YfeO (418 aa).

11 consecutive transmembrane segments (helical) span residues 9 to 31, 55 to 77, 90 to 112, 122 to 140, 147 to 169, 189 to 211, 223 to 244, 259 to 281, 301 to 323, 343 to 363, and 376 to 398; these read MLLLSLPAVAIGIASSLILIVVM, SPLWIIGVLTLTGIAVGLVIRFS, LIGAPVPPSALPGLIVALILGLA, PIMTVNIALAVAIGARLLP, WTILASAGTIGALFGTPVAAALI, PLMAAAAGALTTGLFFHPHFSLP, ILSGAIVAAIAIAAGMVAVWCL, LVLGIGGFILGILGVIGGPVSLF, YFLLAVIKLAALVVAAASGFRGG, VPAVPAAITVSCAILGIVLVV, and VVVPNTTLLPLLCIVMLPAWLLL.

The protein belongs to the chloride channel (TC 2.A.49) family.

The protein localises to the cell membrane. The sequence is that of Putative ion-transport protein YfeO (yfeO) from Escherichia coli O157:H7.